The sequence spans 472 residues: Kynureninase 1 (472 aa).

Pyridoxal 5'-phosphate is bound by residues Leu146, Thr147, 174-177 (FPSD), Ser231, Asp260, His263, and Tyr285. Position 286 is an N6-(pyridoxal phosphate)lysine (Lys286). Pyridoxal 5'-phosphate is bound by residues Trp326 and Asn354.

This sequence belongs to the kynureninase family. Homodimer. It depends on pyridoxal 5'-phosphate as a cofactor.

Its subcellular location is the cytoplasm. It carries out the reaction L-kynurenine + H2O = anthranilate + L-alanine + H(+). The enzyme catalyses 3-hydroxy-L-kynurenine + H2O = 3-hydroxyanthranilate + L-alanine + H(+). The protein operates within amino-acid degradation; L-kynurenine degradation; L-alanine and anthranilate from L-kynurenine: step 1/1. It functions in the pathway cofactor biosynthesis; NAD(+) biosynthesis; quinolinate from L-kynurenine: step 2/3. Its function is as follows. Catalyzes the cleavage of L-kynurenine (L-Kyn) and L-3-hydroxykynurenine (L-3OHKyn) into anthranilic acid (AA) and 3-hydroxyanthranilic acid (3-OHAA), respectively. The polypeptide is Kynureninase 1 (bna5-1) (Aspergillus niger (strain ATCC MYA-4892 / CBS 513.88 / FGSC A1513)).